We begin with the raw amino-acid sequence, 380 residues long: Growth-regulating factor 4 (380 aa).

Residues 1–21 (MDLQLKQWRSQQQNESEEQGS) form a disordered region. Residues 82–117 (FFSWAQWQELELQALIYRYMLAGASVPQELLLPIKK) form the QLQ domain. Positions 151–195 (DPEPGRCKRTDGKKWRCSRDVVAGHKYCDRHIHRGRNRSRKPVET) constitute a WRC domain. Short sequence motifs (bipartite nuclear localization signal) lie at residues 156–166 (RCKRTDGKKWR) and 184–191 (RGRNRSRK). Disordered stretches follow at residues 222 to 270 (NNNH…GRSD) and 284 to 330 (RSSD…NMRN). 2 stretches are compositionally biased toward low complexity: residues 228-245 (SSGS…SCSS) and 285-296 (SSDSTSSPMSSS). A compositionally biased stretch (polar residues) spans 297–320 (TCHLSISMPGNNTSSDVSLKLSTG).

It belongs to the GRF family. As to expression, strongly expressed in actively growing and developing tissues, such as roots, upper stems, and shoot tips containing the shoot apical meristem (SAM) and flower buds. Also expressed in mature flowers, but weakly expressed in mature stems and leaves.

Its subcellular location is the nucleus. Functionally, transcription activator that plays a role in the regulation of cell expansion in leaf and cotyledons tissues. Component of a network formed by miR396, the GRFs and their interacting factors (GIFs) acting in the regulation of meristem function, at least partially through the control of cell proliferation. The polypeptide is Growth-regulating factor 4 (GRF4) (Arabidopsis thaliana (Mouse-ear cress)).